Here is a 508-residue protein sequence, read N- to C-terminus: Lysine--tRNA ligase (508 aa).

The Mg(2+) site is built by E403 and E410.

It belongs to the class-II aminoacyl-tRNA synthetase family. In terms of assembly, homodimer. The cofactor is Mg(2+).

Its subcellular location is the cytoplasm. The enzyme catalyses tRNA(Lys) + L-lysine + ATP = L-lysyl-tRNA(Lys) + AMP + diphosphate. In Methanoculleus marisnigri (strain ATCC 35101 / DSM 1498 / JR1), this protein is Lysine--tRNA ligase.